Reading from the N-terminus, the 23-residue chain is Acidic phospholipase A2 CTs-A2 (23 aa).

Ca(2+) is required as a cofactor. Post-translationally, contains 7 disulfide bonds. As to expression, expressed by the venom gland.

The protein resides in the secreted. It carries out the reaction a 1,2-diacyl-sn-glycero-3-phosphocholine + H2O = a 1-acyl-sn-glycero-3-phosphocholine + a fatty acid + H(+). In terms of biological role, snake venom phospholipase A2 (PLA2) that shows a moderate inhibition of ADP-induced human platelet aggregation when tested on platelet rich plasma. Exhibits moderate hydrolytic activities and prefers the anionic micelles (dPPC with deoxycholate) to the zwitterionic micelles (dPPC with Triton X-100). PLA2 catalyzes the calcium-dependent hydrolysis of the 2-acyl groups in 3-sn-phosphoglycerides. The polypeptide is Acidic phospholipase A2 CTs-A2 (Trimeresurus stejnegeri (Chinese green tree viper)).